Consider the following 297-residue polypeptide: Cyclin-dependent kinase 2 (297 aa).

Residues 4–286 (FQKVEKIGEG…AKVALTHPFF (283 aa)) enclose the Protein kinase domain. ATP contacts are provided by residues 10–18 (IGEGTYGVV), K33, 81–83 (EFL), and D86. Phosphothreonine is present on T14. Phosphotyrosine is present on Y15. D127 functions as the Proton acceptor in the catalytic mechanism. ATP-binding positions include 129 to 132 (KPQN) and D145. T160 carries the post-translational modification Phosphothreonine; by CAK.

It belongs to the protein kinase superfamily. CMGC Ser/Thr protein kinase family. CDC2/CDKX subfamily. In terms of assembly, interacts with spdya.

The enzyme catalyses L-seryl-[protein] + ATP = O-phospho-L-seryl-[protein] + ADP + H(+). The catalysed reaction is L-threonyl-[protein] + ATP = O-phospho-L-threonyl-[protein] + ADP + H(+). With respect to regulation, phosphorylation at Thr-14 or Tyr-15 inactivates the enzyme, while phosphorylation at Thr-160 activates it. Activated by spdya. Functionally, serine/threonine-protein kinase involved in the control of the cell cycle; essential for meiosis, but dispensable for mitosis. Triggers duplication of centrosomes and DNA. Acts at the G1-S transition to promote the E2F transcriptional program and the initiation of DNA synthesis, and modulates G2 progression; controls the timing of entry into mitosis/meiosis by controlling the subsequent activation of cyclin B/CDK1 by phosphorylation, and coordinates the activation of cyclin B/CDK1 at the centrosome and in the nucleus. Crucial role in orchestrating a fine balance between cellular proliferation, cell death, and DNA repair in embryonic stem cells (ESCs). Activity of CDK2 is maximal during S phase and G2; activated by interaction with cyclin E during the early stages of DNA synthesis to permit G1-S transition, and subsequently activated by cyclin A2 (cyclin A1 in germ cells) during the late stages of DNA replication to drive the transition from S phase to mitosis, the G2 phase. This is Cyclin-dependent kinase 2 (cdk2) from Xenopus laevis (African clawed frog).